Consider the following 335-residue polypeptide: Aliphatic sulfonates import ATP-binding protein SsuB (335 aa).

Positions valine 74–leucine 293 constitute an ABC transporter domain. Glycine 106–serine 113 is an ATP binding site. The segment at alanine 308–valine 335 is disordered.

The protein belongs to the ABC transporter superfamily. Aliphatic sulfonates importer (TC 3.A.1.17.2) family. As to quaternary structure, the complex is composed of two ATP-binding proteins (SsuB), two transmembrane proteins (SsuC) and a solute-binding protein (SsuA).

Its subcellular location is the cell inner membrane. It catalyses the reaction ATP + H2O + aliphatic sulfonate-[sulfonate-binding protein]Side 1 = ADP + phosphate + aliphatic sulfonateSide 2 + [sulfonate-binding protein]Side 1.. Part of the ABC transporter complex SsuABC involved in aliphatic sulfonates import. Responsible for energy coupling to the transport system. The protein is Aliphatic sulfonates import ATP-binding protein SsuB of Burkholderia mallei (strain ATCC 23344).